The following is a 419-amino-acid chain: MNIIDELEWRGAIYQQTDEEGLRKWVEEKQISLYCGIDPSGDSMHIGHLIPFMILRRFQNAGHRPIILVGGATGTIGDPSGKKEERKLQSMEQISRNVESLRVQLGKIFDFEGDSAASMVNNYDWTKDVSILDFLRDYGKEFNVNTMLSKDIVASRLEVGISFTEFAYQILQAMDFNHLYEFNDCRLQIGGSDQWGNITAGLDLIRKKQGENAKAFGLTIPLLTKADGTKFGKSEGGAIWLNPEKTTPYEFYQFWINTDDRDVVKYLKYFTFLTETEIDELAKKVEEEPHLRAAQKTLAAEMTKFVHSEEALEQALKISKALFSGDVTALTADEIEQGFKDVPTFVAEDAEVNLVDWLVSLGIEPSKRQAREDVTNGAIYINGERQQNVEKVIDASDRIENKFTIVRRGKKKYFLVSYK.

Tyr-34 provides a ligand contact to L-tyrosine. Positions 39–48 (PSGDSMHIGH) match the 'HIGH' region motif. The L-tyrosine site is built by Tyr-168 and Gln-172. Positions 230-234 (KFGKS) match the 'KMSKS' region motif. Lys-233 contributes to the ATP binding site. One can recognise an S4 RNA-binding domain in the interval 352–418 (VNLVDWLVSL…GKKKYFLVSY (67 aa)).

It belongs to the class-I aminoacyl-tRNA synthetase family. TyrS type 1 subfamily. In terms of assembly, homodimer.

The protein localises to the cytoplasm. The enzyme catalyses tRNA(Tyr) + L-tyrosine + ATP = L-tyrosyl-tRNA(Tyr) + AMP + diphosphate + H(+). Its function is as follows. Catalyzes the attachment of tyrosine to tRNA(Tyr) in a two-step reaction: tyrosine is first activated by ATP to form Tyr-AMP and then transferred to the acceptor end of tRNA(Tyr). The chain is Tyrosine--tRNA ligase from Listeria welshimeri serovar 6b (strain ATCC 35897 / DSM 20650 / CCUG 15529 / CIP 8149 / NCTC 11857 / SLCC 5334 / V8).